We begin with the raw amino-acid sequence, 204 residues long: Casparian strip membrane protein 2 (204 aa).

Topologically, residues 1-42 (MKNESTFIDVPAESSSAMKGKAPLIGVARDHTTSGSGGYNRG) are cytoplasmic. The helical transmembrane segment at 43-63 (LAIFDFLLRLAAIVAALAAAA) threads the bilayer. The Extracellular segment spans residues 64 to 92 (TMGTSDETLPFFTQFLQFEASYDDLPTFQ). Residues 93-113 (FFVIAMALVGGYLVLSLPISV) form a helical membrane-spanning segment. Residues 114–125 (VTILRPLATAPR) are Cytoplasmic-facing. A helical transmembrane segment spans residues 126-146 (LLLLVLDTGVLALNTAAASSA). Topologically, residues 147 to 178 (AAISYLAHSGNQNTNWLPICQQFGDFCQKSSG) are extracellular. Residues 179–199 (AVVSAFVSVVFFTILVVISGV) form a helical membrane-spanning segment. Topologically, residues 200–204 (ALKRH) are cytoplasmic.

This sequence belongs to the Casparian strip membrane proteins (CASP) family. In terms of assembly, homodimer and heterodimers with other CASP proteins. Interacts with CASP1, CASP3 and CASP4.

It is found in the cell membrane. Functionally, regulates membrane-cell wall junctions and localized cell wall deposition. Required for establishment of the Casparian strip membrane domain (CSD) and the subsequent formation of Casparian strips, a cell wall modification of the root endodermis that determines an apoplastic barrier between the intraorganismal apoplasm and the extraorganismal apoplasm and prevents lateral diffusion. This Arabidopsis thaliana (Mouse-ear cress) protein is Casparian strip membrane protein 2 (CASP2).